The following is a 461-amino-acid chain: MLEFLSQQKPKILIIGDFMVDNYTWCDCSRISPEAPVLVAKTLKEDKRLGGAANVYANLKSLGADVFALGVVGDDKSGKFLQENLKGEFLIQKGRKTPFKNRIMAHNQQVLRLDEEDISAILLENELIALFDEKIKDFKAVVLSDYAKGVLTPKVCKAVIKKAKALNIPVLVDPKGSDFSKYSGATLLTPNKKEALEALKFENLEGENLEKGIKKLKEDFALRYSIITLSEAGIALFDEGLKIAPAKALEVYDVTGAGDSVIAVLAFCLASGIEIFKACELANEAAAVVVSKIGSMSVSFDEIKSFNRVDFEKKIKSKEELLTLLKQNDKKIVFTNGCFDIVHFGHIKYLEKAKRLGDVLIVGLNSDASVKRLKGESRPVNSEFQRACMLAAFYFVDFVVIFDEDTPLELISFLKPDILIKGADYKDKLVVGADIVSKVELIDFEEGFSTSKIIEKIKDKK.

The interval 1-312 is ribokinase; the sequence is MLEFLSQQKP…IKSFNRVDFE (312 aa). An ATP-binding site is contributed by 191-194; the sequence is NKKE. Residue Asp259 is part of the active site. A cytidylyltransferase region spans residues 334-461; sequence FTNGCFDIVH…KIIEKIKDKK (128 aa).

This sequence in the N-terminal section; belongs to the carbohydrate kinase PfkB family. It in the C-terminal section; belongs to the cytidylyltransferase family. As to quaternary structure, homodimer.

The enzyme catalyses D-glycero-beta-D-manno-heptose 7-phosphate + ATP = D-glycero-beta-D-manno-heptose 1,7-bisphosphate + ADP + H(+). It catalyses the reaction D-glycero-beta-D-manno-heptose 1-phosphate + ATP + H(+) = ADP-D-glycero-beta-D-manno-heptose + diphosphate. The protein operates within nucleotide-sugar biosynthesis; ADP-L-glycero-beta-D-manno-heptose biosynthesis; ADP-L-glycero-beta-D-manno-heptose from D-glycero-beta-D-manno-heptose 7-phosphate: step 1/4. It participates in nucleotide-sugar biosynthesis; ADP-L-glycero-beta-D-manno-heptose biosynthesis; ADP-L-glycero-beta-D-manno-heptose from D-glycero-beta-D-manno-heptose 7-phosphate: step 3/4. Functionally, catalyzes the phosphorylation of D-glycero-D-manno-heptose 7-phosphate at the C-1 position to selectively form D-glycero-beta-D-manno-heptose-1,7-bisphosphate. Catalyzes the ADP transfer from ATP to D-glycero-beta-D-manno-heptose 1-phosphate, yielding ADP-D-glycero-beta-D-manno-heptose. In Campylobacter jejuni subsp. jejuni serotype O:6 (strain 81116 / NCTC 11828), this protein is Bifunctional protein HldE.